The sequence spans 1025 residues: Serine/threonine-protein kinase TAO2 (1025 aa).

Residues 28–281 (FADLREIGHG…SDMLLKHRFL (254 aa)) form the Protein kinase domain. ATP is bound by residues 34 to 42 (IGHGSFGAV) and lysine 57. Aspartate 151 functions as the Proton acceptor in the catalytic mechanism. Positions 349–373 (ESSQSVPSMSISASSQSSSVNSLAD) are enriched in low complexity. Residues 349–377 (ESSQSVPSMSISASSQSSSVNSLADASDD) form a disordered region. 2 coiled-coil regions span residues 457–650 (SALR…ECAM) and 755–876 (ILKR…EIEA). 2 disordered regions span residues 899-930 (FNQGYQAPPPGWPSRPVPRSGSHWSHGVQNTG) and 945-1025 (SASW…LSYS). Residues 905 to 914 (APPPGWPSRP) are compositionally biased toward pro residues. Low complexity predominate over residues 947–986 (SWGLHPPGSSSSLSALPSSSSSSSSSPSSSSGGRPGLLLL). The span at 1007–1025 (SRSTSVTSQLSNGSHLSYS) shows a compositional bias: polar residues.

It belongs to the protein kinase superfamily. STE Ser/Thr protein kinase family. STE20 subfamily. It depends on Mg(2+) as a cofactor.

The enzyme catalyses L-seryl-[protein] + ATP = O-phospho-L-seryl-[protein] + ADP + H(+). It carries out the reaction L-threonyl-[protein] + ATP = O-phospho-L-threonyl-[protein] + ADP + H(+). Its function is as follows. Serine/threonine-protein kinase involved in different processes such as apoptotic morphological changes, MAPK8/JNK and MAPK14/p38 MAPK signaling pathway. Functionally, activates the JNK MAP kinase pathway. This Xenopus laevis (African clawed frog) protein is Serine/threonine-protein kinase TAO2 (taok2).